A 328-amino-acid chain; its full sequence is 4-hydroxythreonine-4-phosphate dehydrogenase (328 aa).

Threonine 125 provides a ligand contact to substrate. Histidine 160, histidine 203, and histidine 269 together coordinate a divalent metal cation. 3 residues coordinate substrate: lysine 277, asparagine 286, and arginine 295.

This sequence belongs to the PdxA family. In terms of assembly, homodimer. The cofactor is a divalent metal cation.

Its subcellular location is the cytoplasm. It catalyses the reaction 4-(phosphooxy)-L-threonine + NAD(+) = 3-amino-2-oxopropyl phosphate + CO2 + NADH. Its pathway is cofactor biosynthesis; pyridoxine 5'-phosphate biosynthesis; pyridoxine 5'-phosphate from D-erythrose 4-phosphate: step 4/5. In terms of biological role, catalyzes the NAD(P)-dependent oxidation of 4-(phosphooxy)-L-threonine (HTP) into 2-amino-3-oxo-4-(phosphooxy)butyric acid which spontaneously decarboxylates to form 3-amino-2-oxopropyl phosphate (AHAP). The chain is 4-hydroxythreonine-4-phosphate dehydrogenase from Synechococcus sp. (strain RCC307).